The primary structure comprises 353 residues: tRNA N6-adenosine threonylcarbamoyltransferase (353 aa).

Fe cation is bound by residues histidine 109 and histidine 113. Substrate-binding positions include 136–140 (TVSGG), aspartate 169, glycine 182, aspartate 186, and asparagine 284. Aspartate 312 contacts Fe cation.

This sequence belongs to the KAE1 / TsaD family. Requires Fe(2+) as cofactor.

The protein localises to the cytoplasm. The catalysed reaction is L-threonylcarbamoyladenylate + adenosine(37) in tRNA = N(6)-L-threonylcarbamoyladenosine(37) in tRNA + AMP + H(+). Its function is as follows. Required for the formation of a threonylcarbamoyl group on adenosine at position 37 (t(6)A37) in tRNAs that read codons beginning with adenine. Is involved in the transfer of the threonylcarbamoyl moiety of threonylcarbamoyl-AMP (TC-AMP) to the N6 group of A37, together with TsaE and TsaB. TsaD likely plays a direct catalytic role in this reaction. The protein is tRNA N6-adenosine threonylcarbamoyltransferase of Chlorobaculum tepidum (strain ATCC 49652 / DSM 12025 / NBRC 103806 / TLS) (Chlorobium tepidum).